A 184-amino-acid chain; its full sequence is Ribosome-recycling factor (184 aa).

This sequence belongs to the RRF family.

Its subcellular location is the cytoplasm. Functionally, responsible for the release of ribosomes from messenger RNA at the termination of protein biosynthesis. May increase the efficiency of translation by recycling ribosomes from one round of translation to another. This Cutibacterium acnes (strain DSM 16379 / KPA171202) (Propionibacterium acnes) protein is Ribosome-recycling factor.